Here is a 174-residue protein sequence, read N- to C-terminus: Crossover junction endodeoxyribonuclease RuvC (174 aa).

Active-site residues include Asp-8, Glu-67, and Asp-139. Residues Asp-8, Glu-67, and Asp-139 each coordinate Mg(2+).

The protein belongs to the RuvC family. In terms of assembly, homodimer which binds Holliday junction (HJ) DNA. The HJ becomes 2-fold symmetrical on binding to RuvC with unstacked arms; it has a different conformation from HJ DNA in complex with RuvA. In the full resolvosome a probable DNA-RuvA(4)-RuvB(12)-RuvC(2) complex forms which resolves the HJ. Mg(2+) serves as cofactor.

It localises to the cytoplasm. The catalysed reaction is Endonucleolytic cleavage at a junction such as a reciprocal single-stranded crossover between two homologous DNA duplexes (Holliday junction).. The RuvA-RuvB-RuvC complex processes Holliday junction (HJ) DNA during genetic recombination and DNA repair. Endonuclease that resolves HJ intermediates. Cleaves cruciform DNA by making single-stranded nicks across the HJ at symmetrical positions within the homologous arms, yielding a 5'-phosphate and a 3'-hydroxyl group; requires a central core of homology in the junction. The consensus cleavage sequence is 5'-(A/T)TT(C/G)-3'. Cleavage occurs on the 3'-side of the TT dinucleotide at the point of strand exchange. HJ branch migration catalyzed by RuvA-RuvB allows RuvC to scan DNA until it finds its consensus sequence, where it cleaves and resolves the cruciform DNA. This Pseudomonas savastanoi pv. phaseolicola (strain 1448A / Race 6) (Pseudomonas syringae pv. phaseolicola (strain 1448A / Race 6)) protein is Crossover junction endodeoxyribonuclease RuvC.